We begin with the raw amino-acid sequence, 677 residues long: MATDPRTMLVTCALPYANGSIHLGHMLEHIQADIWVRYQRMRGHQVHFVCADDAHGTPIMLKAQQLGITPEEMIAAVSKEHQADFAGFNISFDNYHSTHSDENRELAELIYGRLQAGGKIKSRTISQLFDPEKSMFLPDRFVKGTCPKCKSPEQYGDNCDSCGATYSPTELIDPKSAVSGATPVMKDSEHFFFDLPQFEKWLAEWVRGSGAIQEEMANKMQEWFESGLQQWDITRDAPYFGFEIPGAPGKYFYVWLDAPIGYMASFKNLCNKRRDIDFDSYWKADSEAELYHFIGKDIAYFHCLFWPSMLEGAGFRKPTKVNVHGYVTVNGAKMSKSKGTFIKASTYLNHLDPECLRYYYAAKLNSRIDDLDLNLDDFVARVNADVVNKLVNLASRNAGFIAKRFDGKLAATCAEPELYAEFANSRTAIAEAYESREFSRAIREIMALADKANRYVDDKAPWVIAKQEGADAELQAVCSVGINLFRVLMAYLKPVMPLLAERAEAFLAETLSWDGIEMPLVDHTVAPFKALFSRIEPAKIEAMIDASKEDLAKEQAPKASGPLVDDPISETISYDDFAKIDLRVALIKKAEAVPEADKLLKLQLDIGGETRQVFAGIKSAYNPEDLEGKLTVMVANLAPRKMRFGMSEGMVLAAGPGGKDLWILEPQEGAKPGMRVK.

A 'HIGH' region motif is present at residues 15–25 (PYANGSIHLGH). 4 residues coordinate Zn(2+): cysteine 146, cysteine 149, cysteine 159, and cysteine 162. Residues 333–337 (KMSKS) carry the 'KMSKS' region motif. Lysine 336 lines the ATP pocket. Residues 576-677 (DFAKIDLRVA…EGAKPGMRVK (102 aa)) form the tRNA-binding domain.

Belongs to the class-I aminoacyl-tRNA synthetase family. MetG type 1 subfamily. Homodimer. Zn(2+) serves as cofactor.

It is found in the cytoplasm. It catalyses the reaction tRNA(Met) + L-methionine + ATP = L-methionyl-tRNA(Met) + AMP + diphosphate. Its function is as follows. Is required not only for elongation of protein synthesis but also for the initiation of all mRNA translation through initiator tRNA(fMet) aminoacylation. The sequence is that of Methionine--tRNA ligase from Aeromonas hydrophila subsp. hydrophila (strain ATCC 7966 / DSM 30187 / BCRC 13018 / CCUG 14551 / JCM 1027 / KCTC 2358 / NCIMB 9240 / NCTC 8049).